An 86-amino-acid polypeptide reads, in one-letter code: Large ribosomal subunit protein bL31B (86 aa).

It belongs to the bacterial ribosomal protein bL31 family. Type B subfamily. As to quaternary structure, part of the 50S ribosomal subunit.

This chain is Large ribosomal subunit protein bL31B, found in Vibrio campbellii (strain ATCC BAA-1116).